We begin with the raw amino-acid sequence, 339 residues long: MTVRVAINGFGRIGRNVVRALYESGRRAEITVVAINELADAAGMAHLLKYDTSHGRFAWEVRQERDQLFVGDDAIRVLHERSLQSLPWRELGVDVVLDCTGVYGSREHGEAHIAAGAKKVLFSHPGSNDLDATVVYGVNQDQLRAEHRIVSNASCTTNCIIPVIKLLDDAYGIESGTVTTIHSAMHDQQVIDAYHPDLRRTRAASQSIIPVDTKLAAGITRFFPQFNDRFEAIAVRVPTINVTAIDLSVTVKKPVKANEVNLLLQKAAQGAFHGIVDYTELPLVSVDFNHDPHSAIVDGTQTRVSGAHLIKTLVWCDNEWGFANRMLDTTLAMATVAFR.

Residues 12 to 13 and R81 contribute to the NAD(+) site; that span reads RI. Substrate contacts are provided by residues 154 to 156, R200, 213 to 214, and R236; these read SCT and TK. C155 acts as the Nucleophile in catalysis. N318 contributes to the NAD(+) binding site.

In terms of assembly, homotetramer.

The protein localises to the cytoplasm. It carries out the reaction D-erythrose 4-phosphate + NAD(+) + H2O = 4-phospho-D-erythronate + NADH + 2 H(+). It participates in cofactor biosynthesis; pyridoxine 5'-phosphate biosynthesis; pyridoxine 5'-phosphate from D-erythrose 4-phosphate: step 1/5. Its function is as follows. Catalyzes the NAD-dependent conversion of D-erythrose 4-phosphate to 4-phosphoerythronate. This Escherichia coli (strain K12) protein is D-erythrose-4-phosphate dehydrogenase (epd).